Consider the following 511-residue polypeptide: Protein phosphatase 2C 16 (511 aa).

The signal sequence occupies residues Met-1 to Ser-22. The PPM-type phosphatase domain occupies Leu-189 to Leu-501. 4 residues coordinate Mn(2+): Asp-243, Gly-244, Asp-432, and Asp-492.

The protein belongs to the PP2C family. As to quaternary structure, interacts with SWI3B (via N-terminus). Interacts with ABA-bounded PYR1, PYL1, PYL2, PYL3, PYL4, PYL5, PYL6, PYL8 and PYL9, and with free PYL2, PYL3, PYL4, PYL10 and PYL13. It depends on Mg(2+) as a cofactor. The cofactor is Mn(2+). In terms of tissue distribution, expressed in seeds, roots, stems, leaves and flowers, especially in meristematic tissues, guard cells, embryo and siliques.

The protein resides in the cytoplasm. It is found in the nucleus. It catalyses the reaction O-phospho-L-seryl-[protein] + H2O = L-seryl-[protein] + phosphate. The enzyme catalyses O-phospho-L-threonyl-[protein] + H2O = L-threonyl-[protein] + phosphate. With respect to regulation, repressed by PYR/PYL/RCAR ABA receptors in an ABA-dependent manner. In terms of biological role, key component and repressor of the abscisic acid (ABA) signaling pathway that regulates numerous ABA responses, such as stomatal closure, seed germination and inhibition of vegetative growth. Confers enhanced sensitivity to drought. This chain is Protein phosphatase 2C 16 (HAB1), found in Arabidopsis thaliana (Mouse-ear cress).